Here is a 364-residue protein sequence, read N- to C-terminus: Salivary endonuclease (364 aa).

A signal peptide spans 1-24 (MSSFFLSISPLVLALFHVVVQVCS). The N-linked (GlcNAc...) asparagine glycan is linked to Asn-285.

Belongs to the DNA/RNA non-specific endonuclease family. Requires Mg(2+) as cofactor. As to expression, saliva (at protein level). Female salivary gland.

It is found in the secreted. In terms of biological role, hydrolyzes double-stranded DNA with no sequence specificity. Does not cleave ssDNA and RNA. May facilitate blood meal intake by lowering the local viscosity created by the release of host DNA. The sequence is that of Salivary endonuclease from Culex quinquefasciatus (Southern house mosquito).